Reading from the N-terminus, the 328-residue chain is ABC transporter I family member 20 (328 aa).

In terms of domain architecture, ABC transporter spans 14 to 257 (VEISGLRFTY…SKKSLMRTVE (244 aa)). Residue 55-62 (GSNGAGKT) coordinates ATP. Positions 263–295 (ERDEERKRRKERKANGLPEFETRTEESRVTGDP) are disordered. Basic and acidic residues predominate over residues 282–291 (FETRTEESRV).

Belongs to the ABC transporter superfamily. ABCI family.

The protein resides in the cytoplasm. The polypeptide is ABC transporter I family member 20 (ABCI20) (Arabidopsis thaliana (Mouse-ear cress)).